A 691-amino-acid chain; its full sequence is Two-component response regulator ORR21 (691 aa).

The 116-residue stretch at 17-132 folds into the Response regulatory domain; that stretch reads KVLVVDDDPT…ELKNIWQHVI (116 aa). Residue Asp-68 is modified to 4-aspartylphosphate. Positions 139–155 are enriched in basic and acidic residues; it reads NKEHEHSGSLDDTDRTR. 2 disordered regions span residues 139-204 and 616-647; these read NKEH…KKPR and SHPG…HGFV. The segment at residues 199-258 is a DNA-binding region (myb-like GARP); sequence TSKKPRVVWSVELHQQFVNAVNHLGIDKAVPKKILELMNVPGLTRENVASHLQKFRLYLK. A compositionally biased stretch (low complexity) spans 616–628; that stretch reads SHPGSSSSSFQSS.

Belongs to the ARR family. Type-B subfamily. Two-component system major event consists of a His-to-Asp phosphorelay between a sensor histidine kinase (HK) and a response regulator (RR). In plants, the His-to-Asp phosphorelay involves an additional intermediate named Histidine-containing phosphotransfer protein (HPt). This multistep phosphorelay consists of a His-Asp-His-Asp sequential transfer of a phosphate group between first a His and an Asp of the HK protein, followed by the transfer to a conserved His of the HPt protein and finally the transfer to an Asp in the receiver domain of the RR protein.

Its subcellular location is the nucleus. Functionally, transcriptional activator that binds specific DNA sequence. Functions as a response regulator involved in His-to-Asp phosphorelay signal transduction system. Phosphorylation of the Asp residue in the receiver domain activates the ability of the protein to promote the transcription of target genes. May directly activate some type-A response regulators in response to cytokinins. In Oryza sativa subsp. indica (Rice), this protein is Two-component response regulator ORR21.